The chain runs to 551 residues: Putative BTB/POZ domain-containing protein L76 (551 aa).

The 72-residue stretch at 19–90 (TDIILEIEDD…FYGQENDVID (72 aa)) folds into the BTB domain.

The protein belongs to the mimivirus BTB/WD family.

The protein is Putative BTB/POZ domain-containing protein L76 of Acanthamoeba polyphaga (Amoeba).